Reading from the N-terminus, the 206-residue chain is Apoptosis regulator OPG045 (206 aa).

The protein belongs to the orthopoxvirus OPG045 family. In terms of assembly, homodimer. Interacts with host pro-apoptotic protein BCL2L11 (via BH3 domain). Interacts with host NLRP1. Interacts with host BAK.

It is found in the host mitochondrion outer membrane. The protein resides in the host cytoplasm. Functionally, plays a role in evading host innate immune response by inhibiting host inflammasome activation. Interacts with and inhibits NLR-mediated interleukin-1 beta/IL1B production in infected cells. At the host mitochondria outer membrane, interacts with the BH3 domain of host BAK and prevents BAK from binding active BAX. In turn, host apoptosis is inhibited. This Vaccinia virus (strain L-IVP) (VACV) protein is Apoptosis regulator OPG045 (OPG045).